The chain runs to 169 residues: Ribosome maturation factor RimM (169 aa).

Positions 97–169 (EDEVYFKDLI…KIVVDWEYDY (73 aa)) constitute a PRC barrel domain.

The protein belongs to the RimM family. In terms of assembly, binds ribosomal protein uS19.

Its subcellular location is the cytoplasm. Its function is as follows. An accessory protein needed during the final step in the assembly of 30S ribosomal subunit, possibly for assembly of the head region. Essential for efficient processing of 16S rRNA. May be needed both before and after RbfA during the maturation of 16S rRNA. It has affinity for free ribosomal 30S subunits but not for 70S ribosomes. This is Ribosome maturation factor RimM from Francisella tularensis subsp. holarctica (strain FTNF002-00 / FTA).